The sequence spans 215 residues: uncharacterized protein (215 aa).

Catalysis depends on charge relay system residues serine 114, aspartate 162, and histidine 194.

Belongs to the AB hydrolase superfamily. AB hydrolase 2 family.

This is an uncharacterized protein from Rickettsia typhi (strain ATCC VR-144 / Wilmington).